Reading from the N-terminus, the 339-residue chain is MAARVGINGFGRIGRLVLRVLLSRGMPANVVLINDPFITTDAMAYIFKYDTVHGRFPGTVVGKEGKLEITLNGHVYDIAVSACKNPAEIPWGASNVEVVIESSGAFTTMEKAHLHQQGGAKKVLITAPSADAPMFVYGVNHQSLKADQTVFSNASCTTNCLAPLTKVINDKFGIVRGLMTTVHSTTATQKTVDGPSGKAWRDGRAAAGNIIPSSTGAAKAVTAVIPELKGRLTGMSFRVPTLNVSVVDLTAELKTPATYEEICNAVREAANGELKGVLGYTDEQVVSSDFVGEPMSSIFDAKAGIALDKTFVKLVSWYDNEWGYSNRVVDLLLHSLSLH.

Residues 12 to 13, Asp-35, and Lys-84 contribute to the NAD(+) site; that span reads RI. D-glyceraldehyde 3-phosphate is bound by residues 155 to 157, Thr-186, 215 to 216, and Arg-238; these read SCT and TG. Cys-156 functions as the Nucleophile in the catalytic mechanism. Asn-320 is a binding site for NAD(+).

Belongs to the glyceraldehyde-3-phosphate dehydrogenase family. In terms of assembly, homotetramer.

The protein resides in the cytoplasm. It catalyses the reaction D-glyceraldehyde 3-phosphate + phosphate + NAD(+) = (2R)-3-phospho-glyceroyl phosphate + NADH + H(+). The protein operates within carbohydrate degradation; glycolysis; pyruvate from D-glyceraldehyde 3-phosphate: step 1/5. This chain is Glyceraldehyde-3-phosphate dehydrogenase (GAPD), found in Mastigamoeba balamuthi (Phreatamoeba balamuthi).